Consider the following 357-residue polypeptide: Carbamoyl phosphate synthase small chain (357 aa).

The tract at residues 1–168 is CPSase; that stretch reads MSKRLLILED…STTTAYPSPN (168 aa). L-glutamine is bound by residues Ser46, Gly220, and Gly222. In terms of domain architecture, Glutamine amidotransferase type-1 spans 172-357; the sequence is KVVVVDFGLK…FMDLMDNFKK (186 aa). The active-site Nucleophile is the Cys247. Leu248, Gln251, Asn289, Gly291, and Tyr292 together coordinate L-glutamine. Active-site residues include His331 and Asp333.

Belongs to the CarA family. As to quaternary structure, composed of two chains; the small (or glutamine) chain promotes the hydrolysis of glutamine to ammonia, which is used by the large (or ammonia) chain to synthesize carbamoyl phosphate. Tetramer of heterodimers (alpha,beta)4.

The catalysed reaction is hydrogencarbonate + L-glutamine + 2 ATP + H2O = carbamoyl phosphate + L-glutamate + 2 ADP + phosphate + 2 H(+). The enzyme catalyses L-glutamine + H2O = L-glutamate + NH4(+). The protein operates within amino-acid biosynthesis; L-arginine biosynthesis; carbamoyl phosphate from bicarbonate: step 1/1. It functions in the pathway pyrimidine metabolism; UMP biosynthesis via de novo pathway; (S)-dihydroorotate from bicarbonate: step 1/3. Its function is as follows. Small subunit of the glutamine-dependent carbamoyl phosphate synthetase (CPSase). CPSase catalyzes the formation of carbamoyl phosphate from the ammonia moiety of glutamine, carbonate, and phosphate donated by ATP, constituting the first step of 2 biosynthetic pathways, one leading to arginine and/or urea and the other to pyrimidine nucleotides. The small subunit (glutamine amidotransferase) binds and cleaves glutamine to supply the large subunit with the substrate ammonia. The polypeptide is Carbamoyl phosphate synthase small chain (Lactococcus lactis subsp. lactis (strain IL1403) (Streptococcus lactis)).